We begin with the raw amino-acid sequence, 216 residues long: 2-phospho-L-lactate guanylyltransferase (216 aa).

The protein belongs to the CofC family. In terms of assembly, homodimer.

The catalysed reaction is (2S)-2-phospholactate + GTP + H(+) = (2S)-lactyl-2-diphospho-5'-guanosine + diphosphate. It participates in cofactor biosynthesis; coenzyme F420 biosynthesis. Its function is as follows. Guanylyltransferase that catalyzes the activation of (2S)-2-phospholactate (2-PL) as (2S)-lactyl-2-diphospho-5'-guanosine, via the condensation of 2-PL with GTP. It is involved in the biosynthesis of coenzyme F420, a hydride carrier cofactor. This is 2-phospho-L-lactate guanylyltransferase from Methanocaldococcus infernus (strain DSM 11812 / JCM 15783 / ME).